Here is a 920-residue protein sequence, read N- to C-terminus: Whirlin (920 aa).

A PDZ 1 domain is found at 141 to 224 (LVSLRRAKAH…LVLSVYSAGR (84 aa)). A disordered region spans residues 241 to 262 (QGRSTSPPSSLPHGSTLRQHED). The span at 242–257 (GRSTSPPSSLPHGSTL) shows a compositional bias: polar residues. In terms of domain architecture, PDZ 2 spans 278 to 360 (KVNLVLGDGR…LILTVKDVGR (83 aa)). Disordered regions lie at residues 502–536 (MKAR…TSTT), 561–603 (CETT…QGHD), 630–730 (FSAP…AMGA), and 752–828 (RALP…PTST). Positions 520-536 (SYSDTGSSTGSHGTSTT) are enriched in low complexity. A compositionally biased stretch (polar residues) spans 561-570 (CETTQGSTNA). 2 stretches are compositionally biased toward pro residues: residues 589 to 598 (IKPPPPPPPL) and 636 to 651 (RSPP…PTPG). Residues 655–674 (ARDSPSSPIYASISHANPSS) are compositionally biased toward polar residues. Ser698 carries the post-translational modification Phosphoserine. 2 stretches are compositionally biased toward polar residues: residues 756 to 775 (QTRT…TLSE) and 785 to 800 (EAST…NTKN). Over residues 802 to 813 (NGKELPQTERTT) the composition is skewed to basic and acidic residues. A PDZ 3 domain is found at 829 to 912 (LIRVRKSAAT…TKERDYIDFL (84 aa)).

As to quaternary structure, forms homooligomers. Interacts (via C-terminal PDZ domain) with MYO15A; this interaction is necessary for localization of WHRN to stereocilia tips. Interacts (via C-terminal PDZ domain) with MPP1/p55. Interacts with LRRC4C/NGL1. Interacts with MYO7A. Interacts with RPGR. Interacts with EPS8. Interacts with CASK. Interacts with CIB2. Component of USH2 complex, composed of ADGRV1, PDZD7, USH2A and WHRN. Interacts (via PDZ domains) with PDZD7; the interaction is direct. Interacts (via N-terminal PDZ domain) with USH2A (via cytoplasmic region). Interacts with ADGRV1/MASS1 (via cytoplasmic region). In terms of tissue distribution, ubiquitous. Highly expressed in heart, spleen, lung and liver. Highly expressed in brain, in the olfactory bulb, thalamus, layers III-V of the cerebral cortex and the molecular layer of cerebellum. Detected in soma and dendrites of thalamic neurons, and in cerebrum in cell bodies and apical dendrites of pyramidal neurons. Expressed in retina and inner ear.

It is found in the cytoplasm. It localises to the cell projection. The protein resides in the stereocilium. The protein localises to the growth cone. Its subcellular location is the synapse. Its function is as follows. Involved in hearing and vision as member of the USH2 complex. Necessary for elongation and maintenance of inner and outer hair cell stereocilia in the organ of Corti in the inner ear. Involved in the maintenance of the hair bundle ankle region, which connects stereocilia in cochlear hair cells of the inner ear. In retina photoreceptors, required for the maintenance of periciliary membrane complex that seems to play a role in regulating intracellular protein transport. This chain is Whirlin, found in Rattus norvegicus (Rat).